The chain runs to 239 residues: Phosphoribosylaminoimidazole-succinocarboxamide synthase (239 aa).

This sequence belongs to the SAICAR synthetase family.

It carries out the reaction 5-amino-1-(5-phospho-D-ribosyl)imidazole-4-carboxylate + L-aspartate + ATP = (2S)-2-[5-amino-1-(5-phospho-beta-D-ribosyl)imidazole-4-carboxamido]succinate + ADP + phosphate + 2 H(+). Its pathway is purine metabolism; IMP biosynthesis via de novo pathway; 5-amino-1-(5-phospho-D-ribosyl)imidazole-4-carboxamide from 5-amino-1-(5-phospho-D-ribosyl)imidazole-4-carboxylate: step 1/2. This is Phosphoribosylaminoimidazole-succinocarboxamide synthase from Chlorobium luteolum (strain DSM 273 / BCRC 81028 / 2530) (Pelodictyon luteolum).